Here is a 93-residue protein sequence, read N- to C-terminus: DNA-binding protein Fis (93 aa).

Residues 74–93 (QTRAAQMMGINRGTLRKKLK) constitute a DNA-binding region (H-T-H motif).

It belongs to the transcriptional regulatory Fis family. As to quaternary structure, homodimer.

Activates ribosomal RNA transcription. Plays a direct role in upstream activation of rRNA promoters. The protein is DNA-binding protein Fis of Proteus vulgaris.